The sequence spans 132 residues: Fluoride-specific ion channel FluC 2 (132 aa).

A run of 4 helical transmembrane segments spans residues 8-28 (LQLE…GALL), 41-61 (LLVN…PAAP), 66-86 (LLGI…LAAV), and 96-116 (AALG…ALGF). Gly73 and Thr76 together coordinate Na(+).

This sequence belongs to the fluoride channel Fluc/FEX (TC 1.A.43) family.

It is found in the cell inner membrane. The catalysed reaction is fluoride(in) = fluoride(out). Na(+) is not transported, but it plays an essential structural role and its presence is essential for fluoride channel function. Its function is as follows. Fluoride-specific ion channel. Important for reducing fluoride concentration in the cell, thus reducing its toxicity. In Synechococcus sp. (strain CC9605), this protein is Fluoride-specific ion channel FluC 2.